The chain runs to 437 residues: Mitochondrial distribution and morphology protein 12 (437 aa).

The SMP-LTD domain maps to 1 to 437; the sequence is MSIDINWRTA…VYPSFWTFLI (437 aa). Over residues 73–85 the composition is skewed to acidic residues; sequence DDDADTSDVSEDL. Disordered regions lie at residues 73-101, 187-274, and 354-384; these read DDDA…SELN, SDSG…PPRM, and SEQQ…RQGG. Basic and acidic residues predominate over residues 91-101; sequence SQWDRTHSELN. 2 stretches are compositionally biased toward polar residues: residues 215–240 and 371–381; these read DTSN…NNLN and ADSSAHTSQKR.

It belongs to the MDM12 family. Component of the ER-mitochondria encounter structure (ERMES) or MDM complex, composed of mmm1, mdm10, mdm12 and mdm34. A mmm1 homodimer associates with one molecule of mdm12 on each side in a pairwise head-to-tail manner, and the SMP-LTD domains of mmm1 and mdm12 generate a continuous hydrophobic tunnel for phospholipid trafficking.

The protein resides in the mitochondrion outer membrane. Its subcellular location is the endoplasmic reticulum membrane. Functionally, component of the ERMES/MDM complex, which serves as a molecular tether to connect the endoplasmic reticulum (ER) and mitochondria. Components of this complex are involved in the control of mitochondrial shape and protein biogenesis, and function in nonvesicular lipid trafficking between the ER and mitochondria. Mdm12 is required for the interaction of the ER-resident membrane protein mmm1 and the outer mitochondrial membrane-resident beta-barrel protein mdm10. The mdm12-mmm1 subcomplex functions in the major beta-barrel assembly pathway that is responsible for biogenesis of all mitochondrial outer membrane beta-barrel proteins, and acts in a late step after the SAM complex. The mdm10-mdm12-mmm1 subcomplex further acts in the TOM40-specific pathway after the action of the mdm12-mmm1 complex. Essential for establishing and maintaining the structure of mitochondria and maintenance of mtDNA nucleoids. This Aspergillus clavatus (strain ATCC 1007 / CBS 513.65 / DSM 816 / NCTC 3887 / NRRL 1 / QM 1276 / 107) protein is Mitochondrial distribution and morphology protein 12.